A 445-amino-acid chain; its full sequence is Zinc finger protein 296 (445 aa).

Residues 1 to 10 (MSRRKAGRVP) are compositionally biased toward basic residues. The interval 1-20 (MSRRKAGRVPRRVDPDTDTD) is disordered. Lys31 participates in a covalent cross-link: Glycyl lysine isopeptide (Lys-Gly) (interchain with G-Cter in SUMO2). Residues 62-88 (SRPLGAPSTCAPRMPLSSKSSDRQPWT) are disordered. 3 C2H2-type zinc fingers span residues 138–161 (LSCLQCGRQYTSPWKLLCHAQWDH), 212–234 (PTCDVCKKTLSSFSNLKVHMRSH), and 240–262 (YSCDQCSYACAQSSKLNRHKKTH). Positions 256–359 (NRHKKTHRQL…TAPRKSHGPG (104 aa)) are disordered. The span at 269 to 278 (SPSTSASSRG) shows a compositional bias: polar residues. Gly residues predominate over residues 320–332 (PGSGAQGGPGFVG). The span at 338-351 (KVERTDPVKIEKTA) shows a compositional bias: basic and acidic residues. C2H2-type zinc fingers lie at residues 360-382 (GKCEFCGKSFTNSSNLTVHRRSH), 388-410 (YTCDQCPYACAQSSKLNRHRRTH), and 418-441 (VKCPHCLVPFGLQATLDKHLRQKH).

It belongs to the krueppel C2H2-type zinc-finger protein family. In terms of assembly, interacts with KLF4. In terms of tissue distribution, strongly expressed in testis and embryonic stem cells.

The protein resides in the nucleus. May be a transcriptional corepressor with KLF4. This Mus musculus (Mouse) protein is Zinc finger protein 296.